Reading from the N-terminus, the 215-residue chain is Transcription elongation factor A protein-like 4 (215 aa).

At Met-1 the chain carries N-acetylmethionine. The interval 1–133 (MEKLYSENEG…RKAKRKTNKG (133 aa)) is disordered. Phosphoserine occurs at positions 6, 88, and 102. The span at 25 to 102 (QDERKPEVTC…KPEIEGKPES (78 aa)) shows a compositional bias: basic and acidic residues.

It belongs to the TFS-II family. TFA subfamily.

It is found in the nucleus. Its function is as follows. May be involved in transcriptional regulation. This Homo sapiens (Human) protein is Transcription elongation factor A protein-like 4 (TCEAL4).